Reading from the N-terminus, the 430-residue chain is N-acylneuraminate cytidylyltransferase A (430 aa).

The interval 1-29 is disordered; that stretch reads MDAVNENGKRAMKDDSHGNSTSPKRRKSR. The span at 7–17 shows a compositional bias: basic and acidic residues; that stretch reads NGKRAMKDDSH. Residues 9–27 carry the Bipartite nuclear localization signal motif; the sequence is KRAMKDDSHGNSTSPKRRK. The substrate site is built by Arg-38, Asn-48, Arg-97, Ser-106, Ser-108, and Gln-129. Arg-187 is an active-site residue.

Belongs to the CMP-NeuNAc synthase family. In terms of assembly, homotetramer.

It localises to the nucleus. It catalyses the reaction an N-acylneuraminate + CTP = a CMP-N-acyl-beta-neuraminate + diphosphate. It participates in amino-sugar metabolism; N-acetylneuraminate metabolism. Its function is as follows. Catalyzes the activation of N-acetylneuraminic acid (NeuNAc) to cytidine 5'-monophosphate N-acetylneuraminic acid (CMP-NeuNAc), a substrate required for the addition of sialic acid. Also has activity towards N-glycolylneuraminic acid (Neu5Gc). Has weak activity towards 2-keto-3-deoxy-D-glycero-D-galacto-nononic acid (KDN). In Danio rerio (Zebrafish), this protein is N-acylneuraminate cytidylyltransferase A.